The chain runs to 224 residues: Large ribosomal subunit protein uL3 (224 aa).

The disordered stretch occupies residues S132–K153.

This sequence belongs to the universal ribosomal protein uL3 family. As to quaternary structure, part of the 50S ribosomal subunit. Forms a cluster with proteins L14 and L19.

One of the primary rRNA binding proteins, it binds directly near the 3'-end of the 23S rRNA, where it nucleates assembly of the 50S subunit. In Myxococcus xanthus (strain DK1622), this protein is Large ribosomal subunit protein uL3.